The chain runs to 204 residues: Probable UbiX-like flavin prenyltransferase (204 aa).

Residues 21-23, serine 47, 98-101, and arginine 133 contribute to the FMN site; these read GAT and SMKS.

The protein belongs to the UbiX/PAD1 family. YclB subfamily. Homododecamer.

It catalyses the reaction dimethylallyl phosphate + FMNH2 = prenylated FMNH2 + phosphate. Functionally, involved in the non-oxidative decarboxylation and detoxification of phenolic derivatives under both aerobic and anaerobic conditions. Flavin prenyltransferase that catalyzes the synthesis of the prenylated FMN cofactor (prenyl-FMN) for phenolic acid decarboxylase. The chain is Probable UbiX-like flavin prenyltransferase from Bacillus subtilis (strain 168).